A 211-amino-acid chain; its full sequence is Succinate dehydrogenase subunit 4, mitochondrial (211 aa).

Residues 1-36 (MASRLLARSKALALALSRADAAAPGPAAGVQWLRTL) constitute a mitochondrion transit peptide. A disordered region spans residues 41–64 (RDPAAAASPAPAPRQPAVGSPLGL). His-166 is a heme binding site. Tyr-179 provides a ligand contact to a ubiquinone. The helical transmembrane segment at 188 to 210 (WVFIYFKILLIIMAKETVVYFDL) threads the bilayer.

As to quaternary structure, component of complex II composed of eight subunits in plants: four classical SDH subunits SDH1, SDH2, SDH3 and SDH4 (a flavoprotein (FP), an iron-sulfur protein (IP), and a cytochrome b composed of a large and a small subunit.), as well as four subunits unknown in mitochondria from bacteria and heterotrophic eukaryotes. Requires heme as cofactor.

Its subcellular location is the mitochondrion inner membrane. Its pathway is carbohydrate metabolism; tricarboxylic acid cycle. In terms of biological role, membrane-anchoring subunit of succinate dehydrogenase (SDH). The protein is Succinate dehydrogenase subunit 4, mitochondrial of Oryza sativa subsp. japonica (Rice).